The sequence spans 353 residues: Quinolinate synthase (353 aa).

Residues histidine 47 and serine 68 each coordinate iminosuccinate. Cysteine 113 is a binding site for [4Fe-4S] cluster. Iminosuccinate-binding positions include tyrosine 139–asparagine 141 and serine 156. [4Fe-4S] cluster is bound at residue cysteine 200. Iminosuccinate-binding positions include histidine 226–glutamate 228 and threonine 243. Cysteine 297 contributes to the [4Fe-4S] cluster binding site.

Belongs to the quinolinate synthase family. Type 1 subfamily. The cofactor is [4Fe-4S] cluster.

It is found in the cytoplasm. It carries out the reaction iminosuccinate + dihydroxyacetone phosphate = quinolinate + phosphate + 2 H2O + H(+). It participates in cofactor biosynthesis; NAD(+) biosynthesis; quinolinate from iminoaspartate: step 1/1. Catalyzes the condensation of iminoaspartate with dihydroxyacetone phosphate to form quinolinate. The sequence is that of Quinolinate synthase from Vibrio vulnificus (strain CMCP6).